Here is a 233-residue protein sequence, read N- to C-terminus: Probable fimbrial chaperone protein ElfD (233 aa).

The N-terminal stretch at 1-26 (MKTCITKGIVTVSLTAILLSCSSTWA) is a signal peptide.

It belongs to the periplasmic pilus chaperone family.

Its subcellular location is the periplasm. Its function is as follows. Part of the elfADCG fimbrial operon, which could be required for adherence to host epithelial cells. Could be required for the biogenesis of the ElfA fimbriae. This is Probable fimbrial chaperone protein ElfD (elfD) from Escherichia coli O157:H7.